Consider the following 129-residue polypeptide: Small ribosomal subunit protein uS8 (129 aa).

This sequence belongs to the universal ribosomal protein uS8 family. In terms of assembly, part of the 30S ribosomal subunit. Contacts proteins S5 and S12.

Functionally, one of the primary rRNA binding proteins, it binds directly to 16S rRNA central domain where it helps coordinate assembly of the platform of the 30S subunit. The sequence is that of Small ribosomal subunit protein uS8 from Spiroplasma kunkelii.